The primary structure comprises 63 residues: Large ribosomal subunit protein uL29 (63 aa).

This sequence belongs to the universal ribosomal protein uL29 family.

This is Large ribosomal subunit protein uL29 from Caulobacter vibrioides (strain ATCC 19089 / CIP 103742 / CB 15) (Caulobacter crescentus).